A 461-amino-acid chain; its full sequence is Fibrinogen C domain-containing protein 1 (461 aa).

Residues Met-1–Gln-24 form a disordered region. Residues Met-1–Cys-33 are Cytoplasmic-facing. The span at Leu-15 to Gln-24 shows a compositional bias: basic and acidic residues. A helical; Signal-anchor for type II membrane protein membrane pass occupies residues Thr-34–Leu-54. The Extracellular portion of the chain corresponds to Asn-55–Arg-461. The disordered stretch occupies residues Gly-214–Gly-238. The region spanning Cys-235–Arg-458 is the Fibrinogen C-terminal domain. A disulfide bridge links Cys-244 with Cys-273. Residue Asn-340 is glycosylated (N-linked (GlcNAc...) asparagine). Ca(2+) is bound by residues Asp-393 and Asp-395. The cysteines at positions 401 and 414 are disulfide-linked.

Homotetramer; disulfide-linked. As to expression, expressed in the small and large intestinal epithelial cells with a highly polarized localization to the apical surface corresponding to the brush border and in the ducts of the salivary gland.

The protein resides in the membrane. Functionally, acetyl group-binding receptor which shows a high-affinity and calcium-dependent binding to acetylated structures such as chitin, some N-acetylated carbohydrates, and amino acids, but not to their non-acetylated counterparts. Can facilitate the endocytosis of acetylated components. This chain is Fibrinogen C domain-containing protein 1 (FIBCD1), found in Homo sapiens (Human).